The following is a 124-amino-acid chain: MAIAKEDILEAVSSMSVLELNELVKAFEEKFGVSAAAVAVAGPAGGGAAAAAEEQTEFTVNLTEVGANKVSVIKAVRELTGLGLKEAKDLVDGAPKPVKESVPKAAAEEAKKKLEEAGAKAEIK.

The segment at 94 to 124 (APKPVKESVPKAAAEEAKKKLEEAGAKAEIK) is disordered.

This sequence belongs to the bacterial ribosomal protein bL12 family. In terms of assembly, homodimer. Part of the ribosomal stalk of the 50S ribosomal subunit. Forms a multimeric L10(L12)X complex, where L10 forms an elongated spine to which 2 to 4 L12 dimers bind in a sequential fashion. Binds GTP-bound translation factors.

Functionally, forms part of the ribosomal stalk which helps the ribosome interact with GTP-bound translation factors. Is thus essential for accurate translation. In Paraburkholderia phytofirmans (strain DSM 17436 / LMG 22146 / PsJN) (Burkholderia phytofirmans), this protein is Large ribosomal subunit protein bL12.